The following is a 236-amino-acid chain: 7-cyano-7-deazaguanine synthase (236 aa).

Residue 7 to 17 participates in ATP binding; that stretch reads CSGGLDSVSLA. Zn(2+) contacts are provided by cysteine 185, cysteine 193, cysteine 196, and cysteine 199.

It belongs to the QueC family. Zn(2+) is required as a cofactor.

The catalysed reaction is 7-carboxy-7-deazaguanine + NH4(+) + ATP = 7-cyano-7-deazaguanine + ADP + phosphate + H2O + H(+). Its pathway is purine metabolism; 7-cyano-7-deazaguanine biosynthesis. Catalyzes the ATP-dependent conversion of 7-carboxy-7-deazaguanine (CDG) to 7-cyano-7-deazaguanine (preQ(0)). This chain is 7-cyano-7-deazaguanine synthase, found in Rhizobium rhizogenes (strain K84 / ATCC BAA-868) (Agrobacterium radiobacter).